A 542-amino-acid chain; its full sequence is Polysialoglycoprotein (542 aa).

An N-terminal signal peptide occupies residues 1 to 21 (MIMGGVRELLLVVMTVGVVKV). Positions 22-120 (SCYPVGKSQK…TSEAATGPSG (99 aa)) are excised as a propeptide. The segment at 70-542 (EEYLETNEVE…GPSGDDAMDI (473 aa)) is disordered. Residues 78–95 (VESQASPNHGSSPANDAL) show a composition bias toward polar residues. Positions 97–106 (SEEKLRRVSS) are enriched in basic and acidic residues. The segment covering 107 to 116 (DDAATSEAAT) has biased composition (low complexity). Repeat copies occupy residues 121–133 (DDAT…GPSG), 134–146 (DDAT…GPSG), 147–159 (DDAT…GPSG), 160–172 (DDAT…GPSG), 173–185 (DDAT…GPSG), 186–198 (DDAT…GPSG), 199–211 (DDAT…GPSG), 212–224 (DDAT…GPSG), 225–237 (DDAT…GPSG), 238–250 (DDAT…GPSG), 251–263 (DDAT…GPSG), 264–276 (DDAT…GPSG), 277–289 (DDAT…GPSG), 290–302 (DDAT…GPSG), 303–315 (DDAT…GPSG), 316–328 (DDAT…GPSG), 329–341 (DDAT…GPSG), 342–354 (DDAT…GPSG), 355–367 (DDAT…GPSG), 368–380 (DDAT…GPSG), 381–393 (DDAT…GPSG), 394–406 (DDAT…GPSG), 407–419 (DDAT…GPSG), 420–432 (DDAT…GPSG), 433–445 (DDAT…GPSG), 446–458 (DDAT…GPSG), 459–471 (DDAT…GPSG), 472–484 (DDAT…GPSG), 485–497 (DDAT…GPSG), 498–510 (DDAT…GPSG), 511–523 (DDAT…GPSG), and 524–536 (DDAT…GPSG). A 32 X 13 AA tandem repeats of D-D-A-T-S-E-A-A-T-G-P-S-G region spans residues 121-536 (DDATSEAATG…TSEAATGPSG (416 aa)). A glycan (O-linked (GalNAc...) threonine) is linked at T124. A glycan (O-linked (GalNAc...) serine) is linked at S125. Residues T129 and T137 are each glycosylated (O-linked (GalNAc...) threonine). S138 is a glycosylation site (O-linked (GalNAc...) serine). T142 and T150 each carry an O-linked (GalNAc...) threonine glycan. S151 carries O-linked (GalNAc...) serine glycosylation. T155 and T163 each carry an O-linked (GalNAc...) threonine glycan. O-linked (GalNAc...) serine glycosylation occurs at S164. O-linked (GalNAc...) threonine glycosylation is found at T168 and T176. An O-linked (GalNAc...) serine glycan is attached at S177. O-linked (GalNAc...) threonine glycosylation is found at T181 and T189. S190 is a glycosylation site (O-linked (GalNAc...) serine). 2 O-linked (GalNAc...) threonine glycosylation sites follow: T194 and T202. A glycan (O-linked (GalNAc...) serine) is linked at S203. O-linked (GalNAc...) threonine glycans are attached at residues T207 and T215. Residue S216 is glycosylated (O-linked (GalNAc...) serine). 2 O-linked (GalNAc...) threonine glycosylation sites follow: T220 and T228. S229 carries O-linked (GalNAc...) serine glycosylation. O-linked (GalNAc...) threonine glycans are attached at residues T233 and T241. O-linked (GalNAc...) serine glycosylation is present at S242. O-linked (GalNAc...) threonine glycosylation is found at T246 and T254. O-linked (GalNAc...) serine glycosylation is present at S255. O-linked (GalNAc...) threonine glycans are attached at residues T259 and T267. S268 carries O-linked (GalNAc...) serine glycosylation. O-linked (GalNAc...) threonine glycans are attached at residues T272 and T280. An O-linked (GalNAc...) serine glycan is attached at S281. O-linked (GalNAc...) threonine glycosylation is found at T285 and T293. Residue S294 is glycosylated (O-linked (GalNAc...) serine). Residues T298 and T306 are each glycosylated (O-linked (GalNAc...) threonine). S307 carries an O-linked (GalNAc...) serine glycan. T311 and T319 each carry an O-linked (GalNAc...) threonine glycan. The O-linked (GalNAc...) serine glycan is linked to S320. O-linked (GalNAc...) threonine glycosylation is found at T324 and T332. O-linked (GalNAc...) serine glycosylation is present at S333. T337 and T345 each carry an O-linked (GalNAc...) threonine glycan. S346 carries an O-linked (GalNAc...) serine glycan. O-linked (GalNAc...) threonine glycans are attached at residues T350 and T358. S359 is a glycosylation site (O-linked (GalNAc...) serine). O-linked (GalNAc...) threonine glycosylation is found at T363 and T371. The O-linked (GalNAc...) serine glycan is linked to S372. O-linked (GalNAc...) threonine glycosylation is found at T376 and T384. The O-linked (GalNAc...) serine glycan is linked to S385. O-linked (GalNAc...) threonine glycosylation is found at T389 and T397. A glycan (O-linked (GalNAc...) serine) is linked at S398. O-linked (GalNAc...) threonine glycosylation is found at T402 and T410. An O-linked (GalNAc...) serine glycan is attached at S411. Residues T415 and T423 are each glycosylated (O-linked (GalNAc...) threonine). A glycan (O-linked (GalNAc...) serine) is linked at S424. O-linked (GalNAc...) threonine glycans are attached at residues T428 and T436. Residue S437 is glycosylated (O-linked (GalNAc...) serine). O-linked (GalNAc...) threonine glycans are attached at residues T441 and T449. The O-linked (GalNAc...) serine glycan is linked to S450. Residues T454 and T462 are each glycosylated (O-linked (GalNAc...) threonine). S463 is a glycosylation site (O-linked (GalNAc...) serine). O-linked (GalNAc...) threonine glycosylation is found at T467 and T475. O-linked (GalNAc...) serine glycosylation occurs at S476. Residues T480 and T488 are each glycosylated (O-linked (GalNAc...) threonine). O-linked (GalNAc...) serine glycosylation occurs at S489. Residues T493 and T501 are each glycosylated (O-linked (GalNAc...) threonine). S502 is a glycosylation site (O-linked (GalNAc...) serine). Residues T506 and T514 are each glycosylated (O-linked (GalNAc...) threonine). An O-linked (GalNAc...) serine glycan is attached at S515. O-linked (GalNAc...) threonine glycans are attached at residues T519 and T527. Residue S528 is glycosylated (O-linked (GalNAc...) serine). A glycan (O-linked (GalNAc...) threonine) is linked at T532. Positions 537–542 (DDAMDI) are excised as a propeptide.

Post-translationally, most sialic acid residues exist in the form of polysialyl groups partly capped with deaminoneuraminic acid. In terms of tissue distribution, cortical alveoli of immature ovaries.

In response to egg activation, PSGP is discharged by exocytosis into the perivitelline space, where it undergoes rapid proteolysis into glycotridecapeptides. During fertilization and/or early development the glycotridecapeptides prevent polyspermy or are involved in the formation of a fertilization membrane. The polypeptide is Polysialoglycoprotein (Oncorhynchus mykiss (Rainbow trout)).